We begin with the raw amino-acid sequence, 660 residues long: Long chain acyl-CoA synthetase 1 (660 aa).

Position 225 to 236 (225 to 236 (IMYTSGTSGDPK)) interacts with ATP. Positions 492 to 516 (DGWFHTGDIGEILPNGVLKIIDRKK) are fatty acid-binding.

The protein belongs to the ATP-dependent AMP-binding enzyme family. Requires Mg(2+) as cofactor. In terms of tissue distribution, epidermal-specific expression along the entire stem. In cauline leaves, was expressed over the entire leaf surface, most strongly in trichomes and guard cells, but not in mesophyll cells. In flowers, the expression was detected in the stigma and filaments of the stamens, and in the carpel was expressed specifically in ovaries. In roots, was expressed in primary and lateral roots, but not in the root tips.

Its subcellular location is the endoplasmic reticulum. It catalyses the reaction a long-chain fatty acid + ATP + CoA = a long-chain fatty acyl-CoA + AMP + diphosphate. The protein operates within lipid metabolism; fatty acid metabolism. Activation of long-chain fatty acids for both synthesis of cellular lipids, and degradation via beta-oxidation. Acts in both the wax and cutin pathways. Preferentially uses palmitate, palmitoleate, linoleate and eicosenoate. Seems to have a specific activity against very long-chain fatty acid (VLCFA) class with acids longer than 24 carbons (C(24)). The chain is Long chain acyl-CoA synthetase 1 (LACS1) from Arabidopsis thaliana (Mouse-ear cress).